Reading from the N-terminus, the 190-residue chain is Threonylcarbamoyl-AMP synthase (190 aa).

One can recognise a YrdC-like domain in the interval 7 to 190 (GDAIAAAIDV…ALTGELFRQG (184 aa)).

It belongs to the SUA5 family. TsaC subfamily.

The protein localises to the cytoplasm. It carries out the reaction L-threonine + hydrogencarbonate + ATP = L-threonylcarbamoyladenylate + diphosphate + H2O. Required for the formation of a threonylcarbamoyl group on adenosine at position 37 (t(6)A37) in tRNAs that read codons beginning with adenine. Catalyzes the conversion of L-threonine, HCO(3)(-)/CO(2) and ATP to give threonylcarbamoyl-AMP (TC-AMP) as the acyladenylate intermediate, with the release of diphosphate. The polypeptide is Threonylcarbamoyl-AMP synthase (Escherichia coli O1:K1 / APEC).